Reading from the N-terminus, the 116-residue chain is Large ribosomal subunit protein bL20 (116 aa).

Belongs to the bacterial ribosomal protein bL20 family.

In terms of biological role, binds directly to 23S ribosomal RNA and is necessary for the in vitro assembly process of the 50S ribosomal subunit. It is not involved in the protein synthesizing functions of that subunit. The chain is Large ribosomal subunit protein bL20 from Picosynechococcus sp. (strain ATCC 27264 / PCC 7002 / PR-6) (Agmenellum quadruplicatum).